A 56-amino-acid chain; its full sequence is Large ribosomal subunit protein bL33B (56 aa).

This sequence belongs to the bacterial ribosomal protein bL33 family.

The chain is Large ribosomal subunit protein bL33B from Cutibacterium acnes (strain DSM 16379 / KPA171202) (Propionibacterium acnes).